Consider the following 319-residue polypeptide: L-threo-3-hydroxyaspartate ammonia-lyase (319 aa).

At K53 the chain carries N6-(pyridoxal phosphate)lysine. Pyridoxal 5'-phosphate contacts are provided by residues N80, 179 to 183 (GGGGM), and T304.

The protein belongs to the serine/threonine dehydratase family. In terms of assembly, may be either a monomer or a homodimer. The cofactor is pyridoxal 5'-phosphate. It depends on Mn(2+) as a cofactor. Mg(2+) serves as cofactor. Ca(2+) is required as a cofactor.

It catalyses the reaction (3S)-3-hydroxy-L-aspartate = oxaloacetate + NH4(+). Its activity is regulated as follows. Is strongly inhibited by hydroxylamine and EDTA in vitro. In terms of biological role, catalyzes the deamination of L-threo-3-hydroxyaspartate to oxaloacetate and ammonia. Shows a high specificity towards L-threo-3-hydroxyaspartate as other 3-hydroxyaminoacids, i.e. D,L-erythro- and D-threo-3-hydroxyaspartate, D-threonine, L-threonine, D,L-allothreonine, D,L-threo-3-phenylserine, D-serine, and L-serine, are not substrates for this enzyme. Exhibits no detectable serine and aspartate racemase activity. Might play a role in the detoxification of naturally occurring 3-hydroxyaspartate in Pseudomonas sp. T62 cells. This Pseudomonas sp protein is L-threo-3-hydroxyaspartate ammonia-lyase.